The sequence spans 240 residues: Chromatin structure-remodeling complex protein BSH (240 aa).

It belongs to the SNF5 family. As to quaternary structure, interacts with SWI3A and SWI3B, but not with BRM. Expressed in roots, stems, leaves, flowers and siliques.

Its subcellular location is the nucleus. In terms of biological role, component of a multiprotein complex equivalent of the yeast SWI/SNF complex, an ATP-dependent chromatin-remodeling complex, which is required for the positive and negative regulation of gene expression of a large number of genes. It changes chromatin structure by altering DNA-histone contacts within a nucleosome, leading eventually to a change in nucleosome position, thus facilitating or repressing binding of gene-specific transcription factors. The sequence is that of Chromatin structure-remodeling complex protein BSH (BSH) from Arabidopsis thaliana (Mouse-ear cress).